Consider the following 891-residue polypeptide: von Willebrand factor A domain-containing protein 7 (891 aa).

An N-terminal signal peptide occupies residues 1–28 (MLPTEVPQSHPGPSALLLLQLLLPPTSA). N-linked (GlcNAc...) asparagine glycosylation is present at Asn-55. Residues 237–272 (PKPPGKCSHGGHFDRSSSQPPRGGINKDSTSPGFSP) are disordered. In terms of domain architecture, VWFA spans 313 to 506 (ASSLSFVLDT…SMAALVTLPL (194 aa)).

In terms of tissue distribution, expressed at low level in different cell lines.

Its subcellular location is the secreted. The sequence is that of von Willebrand factor A domain-containing protein 7 (VWA7) from Homo sapiens (Human).